Consider the following 367-residue polypeptide: Small ribosomal subunit biogenesis GTPase RsgA (367 aa).

In terms of domain architecture, CP-type G spans Ala-112–Leu-267. Residues Asn-157–Asp-160 and Gly-209–Thr-217 contribute to the GTP site. Zn(2+) is bound by residues Cys-291, Cys-296, His-298, and Cys-304.

Belongs to the TRAFAC class YlqF/YawG GTPase family. RsgA subfamily. In terms of assembly, monomer. Associates with 30S ribosomal subunit, binds 16S rRNA. Zn(2+) is required as a cofactor.

The protein resides in the cytoplasm. Its function is as follows. One of several proteins that assist in the late maturation steps of the functional core of the 30S ribosomal subunit. Helps release RbfA from mature subunits. May play a role in the assembly of ribosomal proteins into the subunit. Circularly permuted GTPase that catalyzes slow GTP hydrolysis, GTPase activity is stimulated by the 30S ribosomal subunit. The sequence is that of Small ribosomal subunit biogenesis GTPase RsgA from Opitutus terrae (strain DSM 11246 / JCM 15787 / PB90-1).